A 365-amino-acid chain; its full sequence is Histidinol-phosphate aminotransferase 2 (365 aa).

The residue at position 226 (Lys-226) is an N6-(pyridoxal phosphate)lysine.

Belongs to the class-II pyridoxal-phosphate-dependent aminotransferase family. Histidinol-phosphate aminotransferase subfamily. As to quaternary structure, homodimer. Requires pyridoxal 5'-phosphate as cofactor.

The enzyme catalyses L-histidinol phosphate + 2-oxoglutarate = 3-(imidazol-4-yl)-2-oxopropyl phosphate + L-glutamate. The protein operates within amino-acid biosynthesis; L-histidine biosynthesis; L-histidine from 5-phospho-alpha-D-ribose 1-diphosphate: step 7/9. This is Histidinol-phosphate aminotransferase 2 (hisC2) from Pasteurella multocida (strain Pm70).